The sequence spans 343 residues: Cytoplasmic tRNA 2-thiolation protein 1 (343 aa).

This sequence belongs to the TtcA family. CTU1/NCS6/ATPBD3 subfamily.

It localises to the cytoplasm. The protein operates within tRNA modification; 5-methoxycarbonylmethyl-2-thiouridine-tRNA biosynthesis. Functionally, plays a central role in 2-thiolation of mcm(5)S(2)U at tRNA wobble positions of tRNA(Lys), tRNA(Glu) and tRNA(Gln). Directly binds tRNAs and probably acts by catalyzing adenylation of tRNAs, an intermediate required for 2-thiolation. It is unclear whether it acts as a sulfurtransferase that transfers sulfur from thiocarboxylated URM1 onto the uridine of tRNAs at wobble position. This is Cytoplasmic tRNA 2-thiolation protein 1 from Drosophila erecta (Fruit fly).